Consider the following 289-residue polypeptide: Phosphatidylglycerol--prolipoprotein diacylglyceryl transferase (289 aa).

3 helical membrane passes run 24-44, 70-90, and 111-131; these read GIAI…VYLL, GGVL…DWFL, and GING…LWLF. A 1,2-diacyl-sn-glycero-3-phospho-(1'-sn-glycerol) is bound at residue R158. Helical transmembrane passes span 219 to 239 and 253 to 273; these read GYLS…IEFF and FSMG…ILVW.

The protein belongs to the Lgt family.

It localises to the cell inner membrane. It catalyses the reaction L-cysteinyl-[prolipoprotein] + a 1,2-diacyl-sn-glycero-3-phospho-(1'-sn-glycerol) = an S-1,2-diacyl-sn-glyceryl-L-cysteinyl-[prolipoprotein] + sn-glycerol 1-phosphate + H(+). The protein operates within protein modification; lipoprotein biosynthesis (diacylglyceryl transfer). In terms of biological role, catalyzes the transfer of the diacylglyceryl group from phosphatidylglycerol to the sulfhydryl group of the N-terminal cysteine of a prolipoprotein, the first step in the formation of mature lipoproteins. The sequence is that of Phosphatidylglycerol--prolipoprotein diacylglyceryl transferase from Chlorobaculum tepidum (strain ATCC 49652 / DSM 12025 / NBRC 103806 / TLS) (Chlorobium tepidum).